A 119-amino-acid polypeptide reads, in one-letter code: Large ribosomal subunit protein bL20 (119 aa).

Belongs to the bacterial ribosomal protein bL20 family.

Binds directly to 23S ribosomal RNA and is necessary for the in vitro assembly process of the 50S ribosomal subunit. It is not involved in the protein synthesizing functions of that subunit. This chain is Large ribosomal subunit protein bL20, found in Geobacillus kaustophilus (strain HTA426).